A 122-amino-acid polypeptide reads, in one-letter code: Large ribosomal subunit protein uL14 (122 aa).

The protein belongs to the universal ribosomal protein uL14 family. In terms of assembly, part of the 50S ribosomal subunit. Forms a cluster with proteins L3 and L19. In the 70S ribosome, L14 and L19 interact and together make contacts with the 16S rRNA in bridges B5 and B8.

In terms of biological role, binds to 23S rRNA. Forms part of two intersubunit bridges in the 70S ribosome. This Ectopseudomonas mendocina (strain ymp) (Pseudomonas mendocina) protein is Large ribosomal subunit protein uL14.